A 450-amino-acid chain; its full sequence is Sorting nexin-4 (450 aa).

The residue at position 1 (M1) is an N-acetylmethionine. The disordered stretch occupies residues 1–46 (MEQAPPDPERQLQPAPLEPLGSPDAVLGAAVGKETEGAGEESSGVD). Position 22 is a phosphoserine (S22). The 127-residue stretch at 61-187 (SVSEAEKRTG…YLFLTQEGNW (127 aa)) folds into the PX domain. Residues R106, S108, K132, and R154 each contribute to the a 1,2-diacyl-sn-glycero-3-phospho-(1D-myo-inositol-3-phosphate) site.

The protein belongs to the sorting nexin family. In terms of assembly, heterodimer; heterodimerizes with SNX7 or SNX30. Interacts with WWC1/KIBRA. Identified in a complex with WWC1/KIBRA and dynein components DYNLL1 and DYNC1I2. Interacts with BIN1.

The protein localises to the early endosome. The protein resides in the early endosome membrane. Its function is as follows. Involved in the regulation of endocytosis and in several stages of intracellular trafficking. Plays a role in recycling endocytosed transferrin receptor and prevent its degradation. Involved in autophagosome assembly by regulating trafficking and recycling of phospholipid scramblase ATG9A. The protein is Sorting nexin-4 of Pongo abelii (Sumatran orangutan).